A 230-amino-acid chain; its full sequence is MRITWLGHAAFEVEIDGVNVLIDPFLSGNPKAAKSPDEVDPDLVLVTHGHGDHLGDAVEICKRTGATLVGIYEIAVYAQGQGVENVEEMNIGGTIEVEGLEITQVPAWHSSEIVEDGEIVAGGTPVGYVVSGEEGSVYHAGDTGLSMDMKLIGELYEPEVALLPIGSRFTMGPKEAAKAVELIEPEVAIPMHYGTFPPIEQDPEEFKREVEELGLDVEVVILEPGESYER.

This sequence belongs to the UPF0173 family.

In Methanopyrus kandleri (strain AV19 / DSM 6324 / JCM 9639 / NBRC 100938), this protein is UPF0173 metal-dependent hydrolase MK1542.